A 1127-amino-acid polypeptide reads, in one-letter code: Glutamate receptor-interacting protein 1 (1127 aa).

Gln11 carries S-palmitoyl cysteine lipidation. Position 43 is a phosphoserine (Ser43). 6 PDZ domains span residues 53 to 136 (VVEL…EYEL), 150 to 238 (TVEV…EYDV), 252 to 336 (LVEV…LPHH), 471 to 560 (EVVL…EFDV), 572 to 657 (HVKL…RKDE), and 672 to 754 (TVEL…KKQT). 3 disordered regions span residues 752–802 (KQTD…PSVD), 840–865 (KQRT…SNED), and 942–980 (MARS…GRKS). Polar residues-rich tracts occupy residues 840 to 856 (KQRT…SQTY) and 947 to 973 (LGRQ…NTLP). The PDZ 7 domain maps to 1003-1085 (KVTLYKDSGM…KLDLVISRNP (83 aa)). Residues 1108–1127 (FFQQPSHGGNLETREPTNTL) form a disordered region.

As to quaternary structure, interacts with EFNB3, GRIA2, GRIA3, GRIPAP1/GRASP1, PPFIA1, PPFIA4, FRAS1, PTPRF, liprins-alpha and the C-terminal tail of PRLHR. Can form homomultimers or heteromultimers with GRIP2. Interacts with EFNB1, EPHA7, EPHB2, KIF5A, KIF5B and KIF5C. Forms a ternary complex with GRIA2 and CSPG4. Interacts with ATAD1 in an ATP-dependent manner. ATAD1-catalyzed ATP hydrolysis disrupts binding to ATAD1 and to GRIA2 and leads to AMPAR complex disassembly. Interacts with SLC30A9 and PLCD4. Interacts with BUD23. Forms a complex with NSG1, GRIA2 and STX12; controls the intracellular fate of AMPAR and the endosomal sorting of the GRIA2 subunit toward recycling and membrane targeting. Interacts with NSG1. Palmitoylation of isoform 2. As to expression, expressed in brain. Isoform 2 is the major isoform in brain. Expressed in oligodendrocyte lineage cells.

The protein resides in the membrane. It localises to the cytoplasmic vesicle. The protein localises to the perikaryon. It is found in the cell projection. Its subcellular location is the dendrite. The protein resides in the cytoplasm. It localises to the endomembrane system. The protein localises to the postsynaptic cell membrane. It is found in the postsynaptic density. Its subcellular location is the endoplasmic reticulum membrane. May play a role as a localized scaffold for the assembly of a multiprotein signaling complex and as mediator of the trafficking of its binding partners at specific subcellular location in neurons. Through complex formation with NSG1, GRIA2 and STX12 controls the intracellular fate of AMPAR and the endosomal sorting of the GRIA2 subunit toward recycling and membrane targeting. The chain is Glutamate receptor-interacting protein 1 (Grip1) from Mus musculus (Mouse).